A 127-amino-acid polypeptide reads, in one-letter code: uncharacterized protein (127 aa).

This is an uncharacterized protein from Pasteurella multocida (strain Pm70).